A 315-amino-acid chain; its full sequence is Lipoyl synthase (315 aa).

Residues Met-1 to Pro-33 form a disordered region. Over residues Arg-9–Arg-29 the composition is skewed to basic and acidic residues. 7 residues coordinate [4Fe-4S] cluster: Cys-54, Cys-59, Cys-65, Cys-80, Cys-84, Cys-87, and Ser-294. The Radical SAM core domain maps to Trp-66 to Leu-283.

This sequence belongs to the radical SAM superfamily. Lipoyl synthase family. The cofactor is [4Fe-4S] cluster.

It is found in the cytoplasm. The enzyme catalyses [[Fe-S] cluster scaffold protein carrying a second [4Fe-4S](2+) cluster] + N(6)-octanoyl-L-lysyl-[protein] + 2 oxidized [2Fe-2S]-[ferredoxin] + 2 S-adenosyl-L-methionine + 4 H(+) = [[Fe-S] cluster scaffold protein] + N(6)-[(R)-dihydrolipoyl]-L-lysyl-[protein] + 4 Fe(3+) + 2 hydrogen sulfide + 2 5'-deoxyadenosine + 2 L-methionine + 2 reduced [2Fe-2S]-[ferredoxin]. It functions in the pathway protein modification; protein lipoylation via endogenous pathway; protein N(6)-(lipoyl)lysine from octanoyl-[acyl-carrier-protein]: step 2/2. Functionally, catalyzes the radical-mediated insertion of two sulfur atoms into the C-6 and C-8 positions of the octanoyl moiety bound to the lipoyl domains of lipoate-dependent enzymes, thereby converting the octanoylated domains into lipoylated derivatives. The sequence is that of Lipoyl synthase from Paracoccus denitrificans (strain Pd 1222).